A 103-amino-acid chain; its full sequence is Large ribosomal subunit protein bL21 (103 aa).

Belongs to the bacterial ribosomal protein bL21 family. In terms of assembly, part of the 50S ribosomal subunit. Contacts protein L20.

In terms of biological role, this protein binds to 23S rRNA in the presence of protein L20. The chain is Large ribosomal subunit protein bL21 from Burkholderia mallei (strain NCTC 10247).